Consider the following 1407-residue polypeptide: DNA-directed RNA polymerase subunit beta' (1407 aa).

Residues Cys70, Cys72, Cys85, and Cys88 each contribute to the Zn(2+) site. Asp460, Asp462, and Asp464 together coordinate Mg(2+). Zn(2+) is bound by residues Cys814, Cys888, Cys895, and Cys898.

Belongs to the RNA polymerase beta' chain family. As to quaternary structure, the RNAP catalytic core consists of 2 alpha, 1 beta, 1 beta' and 1 omega subunit. When a sigma factor is associated with the core the holoenzyme is formed, which can initiate transcription. The cofactor is Mg(2+). It depends on Zn(2+) as a cofactor.

It carries out the reaction RNA(n) + a ribonucleoside 5'-triphosphate = RNA(n+1) + diphosphate. In terms of biological role, DNA-dependent RNA polymerase catalyzes the transcription of DNA into RNA using the four ribonucleoside triphosphates as substrates. The sequence is that of DNA-directed RNA polymerase subunit beta' from Erwinia tasmaniensis (strain DSM 17950 / CFBP 7177 / CIP 109463 / NCPPB 4357 / Et1/99).